We begin with the raw amino-acid sequence, 89 residues long: Small ribosomal subunit protein uS15 (89 aa).

This sequence belongs to the universal ribosomal protein uS15 family. Part of the 30S ribosomal subunit. Forms a bridge to the 50S subunit in the 70S ribosome, contacting the 23S rRNA.

One of the primary rRNA binding proteins, it binds directly to 16S rRNA where it helps nucleate assembly of the platform of the 30S subunit by binding and bridging several RNA helices of the 16S rRNA. Functionally, forms an intersubunit bridge (bridge B4) with the 23S rRNA of the 50S subunit in the ribosome. The chain is Small ribosomal subunit protein uS15 from Dictyoglomus thermophilum (strain ATCC 35947 / DSM 3960 / H-6-12).